A 176-amino-acid polypeptide reads, in one-letter code: RNA 2',3'-cyclic phosphodiesterase (176 aa).

His43 functions as the Proton donor in the catalytic mechanism. 2 short sequence motifs (HXTX) span residues His43–Leu46 and His125–Leu128. The active-site Proton acceptor is His125.

This sequence belongs to the 2H phosphoesterase superfamily. ThpR family. In terms of assembly, monomer.

The catalysed reaction is a 3'-end 2',3'-cyclophospho-ribonucleotide-RNA + H2O = a 3'-end 2'-phospho-ribonucleotide-RNA + H(+). In terms of biological role, hydrolyzes RNA 2',3'-cyclic phosphodiester to an RNA 2'-phosphomonoester. In vitro, can also ligate 5' and 3' half-tRNA molecules with 2',3'-cyclic phosphate and 5'-hydroxyl termini, respectively, to the product containing the 2'-5' phosphodiester linkage. This reaction does not require ATP and is reversible. The sequence is that of RNA 2',3'-cyclic phosphodiesterase from Escherichia coli (strain K12).